The sequence spans 210 residues: uncharacterized protein (210 aa).

4 consecutive transmembrane segments (helical) span residues 5-25 (LAYIPIAAMMVIIPGADTMLV), 50-70 (FWTVIAILGLSVVIAKSVILF), 75-95 (YLGAAYLIYLGVKSFFAKSMF), and 155-175 (IILASILTLLAVLWFLFLVYI).

Belongs to the Rht family.

The protein localises to the cell membrane. This is an uncharacterized protein from Bacillus subtilis (strain 168).